Reading from the N-terminus, the 511-residue chain is V-type proton ATPase subunit B, brain isoform (511 aa).

Arg-400 contacts ATP.

The protein belongs to the ATPase alpha/beta chains family. V-ATPase is a heteromultimeric enzyme made up of two complexes: the ATP-hydrolytic V1 complex and the proton translocation V0 complex. The V1 complex consists of three catalytic AB heterodimers that form a heterohexamer, three peripheral stalks each consisting of EG heterodimers, one central rotor including subunits D and F, and the regulatory subunits C and H. The proton translocation complex V0 consists of the proton transport subunit a, a ring of proteolipid subunits c9c'', rotary subunit d, subunits e and f, and the accessory subunits ATP6AP1/Ac45 and ATP6AP2/PRR. In terms of tissue distribution, kidney; found in early distal nephron, encompassing thick ascending limbs and distal convoluted tubules and in the alpha-intercalated cells of the cortical collecting ducts (at protein level). Expressed in epididymal clear cells (at protein level). Mainly expressed in the organ of Corti and spiral ganglion neurons, in both the early postnatal cochlea (P2) and the adult cochlea (P30).

It localises to the apical cell membrane. The protein resides in the melanosome. Its subcellular location is the cytoplasm. The protein localises to the cytoplasmic vesicle. It is found in the secretory vesicle. It localises to the synaptic vesicle membrane. The protein resides in the clathrin-coated vesicle membrane. Its function is as follows. Non-catalytic subunit of the V1 complex of vacuolar(H+)-ATPase (V-ATPase), a multisubunit enzyme composed of a peripheral complex (V1) that hydrolyzes ATP and a membrane integral complex (V0) that translocates protons. V-ATPase is responsible for acidifying and maintaining the pH of intracellular compartments and in some cell types, is targeted to the plasma membrane, where it is responsible for acidifying the extracellular environment. In renal intercalated cells, can partially compensate the lack of ATP6V1B1 and mediate secretion of protons (H+) into the urine under base-line conditions but not in conditions of acid load. In Mus musculus (Mouse), this protein is V-type proton ATPase subunit B, brain isoform (Atp6v1b2).